Consider the following 349-residue polypeptide: AA9 family lytic polysaccharide monooxygenase A (349 aa).

The first 19 residues, methionine 1 to alanine 19, serve as a signal peptide directing secretion. Cu(2+) contacts are provided by histidine 20 and histidine 102. Cysteine 62 and cysteine 183 are disulfide-bonded. Position 169 (histidine 169) interacts with O2. Tyrosine 180 contributes to the Cu(2+) binding site. Residues aspartate 233–cysteine 304 are disordered. Composition is skewed to low complexity over residues glycine 234–threonine 262 and threonine 269–cysteine 304. Residues glycine 311 to valine 347 form the CBM1 domain. Asparagine 323 carries an N-linked (GlcNAc...) asparagine glycan.

It belongs to the polysaccharide monooxygenase AA9 family. Cu(2+) is required as a cofactor.

Its subcellular location is the secreted. It catalyses the reaction [(1-&gt;4)-beta-D-glucosyl]n+m + reduced acceptor + O2 = 4-dehydro-beta-D-glucosyl-[(1-&gt;4)-beta-D-glucosyl]n-1 + [(1-&gt;4)-beta-D-glucosyl]m + acceptor + H2O.. In terms of biological role, lytic polysaccharide monooxygenase (LPMO) that depolymerizes crystalline and amorphous polysaccharides via the oxidation of scissile alpha- or beta-(1-4)-glycosidic bonds, yielding C4 oxidation products. Catalysis by LPMOs requires the reduction of the active-site copper from Cu(II) to Cu(I) by a reducing agent and H(2)O(2) or O(2) as a cosubstrate. The polypeptide is AA9 family lytic polysaccharide monooxygenase A (eglD) (Aspergillus fumigatus (strain CBS 144.89 / FGSC A1163 / CEA10) (Neosartorya fumigata)).